A 240-amino-acid polypeptide reads, in one-letter code: UDP-2,3-diacylglucosamine hydrolase (240 aa).

Residues aspartate 8, histidine 10, aspartate 41, asparagine 79, and histidine 114 each coordinate Mn(2+). 79–80 (NR) serves as a coordination point for substrate. Residues aspartate 122, serine 160, asparagine 164, lysine 167, and histidine 195 each coordinate substrate. Mn(2+) contacts are provided by histidine 195 and histidine 197.

Belongs to the LpxH family. Mn(2+) is required as a cofactor.

The protein localises to the cell inner membrane. The catalysed reaction is UDP-2-N,3-O-bis[(3R)-3-hydroxytetradecanoyl]-alpha-D-glucosamine + H2O = 2-N,3-O-bis[(3R)-3-hydroxytetradecanoyl]-alpha-D-glucosaminyl 1-phosphate + UMP + 2 H(+). It functions in the pathway glycolipid biosynthesis; lipid IV(A) biosynthesis; lipid IV(A) from (3R)-3-hydroxytetradecanoyl-[acyl-carrier-protein] and UDP-N-acetyl-alpha-D-glucosamine: step 4/6. In terms of biological role, hydrolyzes the pyrophosphate bond of UDP-2,3-diacylglucosamine to yield 2,3-diacylglucosamine 1-phosphate (lipid X) and UMP by catalyzing the attack of water at the alpha-P atom. Involved in the biosynthesis of lipid A, a phosphorylated glycolipid that anchors the lipopolysaccharide to the outer membrane of the cell. This chain is UDP-2,3-diacylglucosamine hydrolase, found in Salmonella dublin (strain CT_02021853).